Consider the following 268-residue polypeptide: Forkhead box protein R1 (268 aa).

A disordered region spans residues 91–126 (EDSCSEASEVQQPLPPCRQKRKQRRSTVPLPLAPGR). The segment at residues 149 to 248 (RPPLHYFHLI…KEARTLASTQ (100 aa)) is a DNA-binding region (fork-head).

As to expression, expressed in adult germ cells (at protein level). Expressed in heart, liver, lung and embryonic brain.

The protein resides in the nucleus. It localises to the cytoplasm. It is found in the perinuclear region. In terms of biological role, transcription factor which acts as both an activator and a repressor. Activates transcription of a number of genes including the heat shock chaperones HSPA1A and HSPA6 and the antioxidant NADPH-dependent reductase DHRS2 which are involved in protection against oxidative stress. Required for normal brain development. In Mus musculus (Mouse), this protein is Forkhead box protein R1 (Foxr1).